We begin with the raw amino-acid sequence, 311 residues long: tRNA-cytidine(32) 2-sulfurtransferase (311 aa).

The PP-loop motif signature appears at 47-52 (SGGKDS). C122, C125, and C213 together coordinate [4Fe-4S] cluster.

Belongs to the TtcA family. Homodimer. The cofactor is Mg(2+). [4Fe-4S] cluster serves as cofactor.

Its subcellular location is the cytoplasm. It catalyses the reaction cytidine(32) in tRNA + S-sulfanyl-L-cysteinyl-[cysteine desulfurase] + AH2 + ATP = 2-thiocytidine(32) in tRNA + L-cysteinyl-[cysteine desulfurase] + A + AMP + diphosphate + H(+). Its pathway is tRNA modification. Catalyzes the ATP-dependent 2-thiolation of cytidine in position 32 of tRNA, to form 2-thiocytidine (s(2)C32). The sulfur atoms are provided by the cysteine/cysteine desulfurase (IscS) system. The polypeptide is tRNA-cytidine(32) 2-sulfurtransferase (Salmonella arizonae (strain ATCC BAA-731 / CDC346-86 / RSK2980)).